The primary structure comprises 505 residues: 2-isopropylmalate synthase (505 aa).

The 265-residue stretch at 5–269 (IKIFDTTLRD…ETGIHTEYLY (265 aa)) folds into the Pyruvate carboxyltransferase domain. Mn(2+)-binding residues include Asp-14, His-204, His-206, and Asn-240. The segment at 393 to 505 (SLLYFHTFTG…AVNRFELRKR (113 aa)) is regulatory domain.

This sequence belongs to the alpha-IPM synthase/homocitrate synthase family. LeuA type 1 subfamily. Homodimer. Mn(2+) is required as a cofactor.

It is found in the cytoplasm. It carries out the reaction 3-methyl-2-oxobutanoate + acetyl-CoA + H2O = (2S)-2-isopropylmalate + CoA + H(+). Its pathway is amino-acid biosynthesis; L-leucine biosynthesis; L-leucine from 3-methyl-2-oxobutanoate: step 1/4. Its function is as follows. Catalyzes the condensation of the acetyl group of acetyl-CoA with 3-methyl-2-oxobutanoate (2-ketoisovalerate) to form 3-carboxy-3-hydroxy-4-methylpentanoate (2-isopropylmalate). This Sediminispirochaeta smaragdinae (strain DSM 11293 / JCM 15392 / SEBR 4228) (Spirochaeta smaragdinae) protein is 2-isopropylmalate synthase.